Here is a 291-residue protein sequence, read N- to C-terminus: N-acetylmannosamine kinase (291 aa).

Residues Ala-5–Lys-12 and Gly-132–Ser-139 each bind ATP. Zn(2+) contacts are provided by His-156, Cys-166, Cys-168, and Cys-173.

Belongs to the ROK (NagC/XylR) family. NanK subfamily. As to quaternary structure, homodimer.

It carries out the reaction an N-acyl-D-mannosamine + ATP = an N-acyl-D-mannosamine 6-phosphate + ADP + H(+). It participates in amino-sugar metabolism; N-acetylneuraminate degradation; D-fructose 6-phosphate from N-acetylneuraminate: step 2/5. Functionally, catalyzes the phosphorylation of N-acetylmannosamine (ManNAc) to ManNAc-6-P. This chain is N-acetylmannosamine kinase, found in Shigella boydii serotype 18 (strain CDC 3083-94 / BS512).